Reading from the N-terminus, the 697-residue chain is Elongation factor G (697 aa).

Residues 8-290 form the tr-type G domain; the sequence is ERYRNIGISA…AVLDFLPSPV (283 aa). Residues 17 to 24, 88 to 92, and 142 to 145 contribute to the GTP site; these read AHIDAGKT, DTPGH, and NKMD.

Belongs to the TRAFAC class translation factor GTPase superfamily. Classic translation factor GTPase family. EF-G/EF-2 subfamily.

Its subcellular location is the cytoplasm. Its function is as follows. Catalyzes the GTP-dependent ribosomal translocation step during translation elongation. During this step, the ribosome changes from the pre-translocational (PRE) to the post-translocational (POST) state as the newly formed A-site-bound peptidyl-tRNA and P-site-bound deacylated tRNA move to the P and E sites, respectively. Catalyzes the coordinated movement of the two tRNA molecules, the mRNA and conformational changes in the ribosome. The polypeptide is Elongation factor G (Methylobacillus flagellatus (strain ATCC 51484 / DSM 6875 / VKM B-1610 / KT)).